Here is a 468-residue protein sequence, read N- to C-terminus: MRGIAVFLAFISLIFASPLTVKSPLVDDFYTAPDGYESAKLGEILKLRKTPSKLSSMFFEIDIKNSWQLLVRSEDSFGNATAIVTTVIEPYNADPSKVLSYQTFEDSANIECSPSYGMQYGAPWSTVATQIDMALMVPMLKQGYYVVSPDYEGPKSTFTVGRQSGKATLDSIRAILKSNKFTGIKSDAKVAMWGYSGGSLASGWAAALQPKYAPELKKNLIGAALGGFVTNITATAEATDGTLFAGLVPNALSGLANEYPEFKEILYQKVSKAATDNLRQGTEHCIGGAILYFAEDQYFTGDDRAFPGGYGLLKEEVVNKTISENNLMQMDKDYLPDIPIFVYHGALDSIVPISNVHVTYKNWCDWGINSFEFSEDLLNGHITETIVGAPAAITWLEARFDGEPVVKGCKKTSRITNFSYPNISDSTSSIFEGILNSVTGSELGPGVTSDNITLDGLTGFLGNFIDLK.

The signal sequence occupies residues 1–16 (MRGIAVFLAFISLIFA). N-linked (GlcNAc...) asparagine glycosylation occurs at asparagine 79. Cysteine 112 and cysteine 285 form a disulfide bridge. Serine 196 (charge relay system) is an active-site residue. N-linked (GlcNAc...) asparagine glycans are attached at residues asparagine 231 and asparagine 319. Catalysis depends on charge relay system residues aspartate 348 and histidine 381. Cysteine 364 and cysteine 409 form a disulfide bridge. N-linked (GlcNAc...) asparagine glycans are attached at residues asparagine 417, asparagine 422, and asparagine 451.

The protein belongs to the AB hydrolase superfamily. Lipase family. Class Lip subfamily.

It is found in the secreted. It catalyses the reaction a triacylglycerol + H2O = a diacylglycerol + a fatty acid + H(+). Its function is as follows. Secreted lipase that is able to hydrolyze both the neutral triacylglycerols and the monopalmitate ester Tween 40, allowing the use of hydrolyzed products as carbon sources. Has broad lipolytic activity, which may be important for colonization and subsequent infection, therefore contributing to the persistence and virulence in human tissue. The polypeptide is Lipase 1 (Candida albicans (strain SC5314 / ATCC MYA-2876) (Yeast)).